The sequence spans 190 residues: Proline-rich protein 3 (190 aa).

Disordered stretches follow at residues 1 to 94 (MPKR…GLGP), 110 to 130 (PPFP…KEAR), and 142 to 161 (KNTY…SDRP). The span at 37 to 48 (MGPPSLLGPPPM) shows a compositional bias: pro residues. The C3H1-type zinc finger occupies 157–185 (KSDRPVCRHFSKKGHCRYEDHCAFYHPGV).

This chain is Proline-rich protein 3 (Prr3), found in Mus musculus (Mouse).